The sequence spans 206 residues: Small ribosomal subunit protein uS4 (206 aa).

The S4 RNA-binding domain maps to 96–156 (GRLDNVVYRM…EKAKKQSRVK (61 aa)).

Belongs to the universal ribosomal protein uS4 family. As to quaternary structure, part of the 30S ribosomal subunit. Contacts protein S5. The interaction surface between S4 and S5 is involved in control of translational fidelity.

Functionally, one of the primary rRNA binding proteins, it binds directly to 16S rRNA where it nucleates assembly of the body of the 30S subunit. With S5 and S12 plays an important role in translational accuracy. The polypeptide is Small ribosomal subunit protein uS4 (Salmonella agona (strain SL483)).